Reading from the N-terminus, the 34-residue chain is Calcitonin-like peptide 1 (34 aa).

Cysteine 2 and cysteine 7 are joined by a disulfide. A Proline amide modification is found at proline 34.

In Odorrana schmackeri (Schmacker's frog), this protein is Calcitonin-like peptide 1.